The sequence spans 225 residues: MNSPIDKLERKLGYQFKDAGLINLALTHRSANSKHNERLEFLGDSILSFVIADDLYHRFPKVNEGDMSRMRATLVRGHTLAELGREFDLGDYLKLGPGELKSGGFRRDSILADAVEAIIGAIYLDSDIEKVRSIVLSWYNSRLEAIKPGVSQKDPKTRLQEFLQGRRKPLPVYTVTNIKGEAHNQEFTVECEVAGVDKPVIGKGTSRRKAEQAAAETALEQLTNG.

Positions 5–127 (IDKLERKLGY…IIGAIYLDSD (123 aa)) constitute an RNase III domain. Glu-40 serves as a coordination point for Mg(2+). Asp-44 is an active-site residue. Residues Asp-113 and Glu-116 each contribute to the Mg(2+) site. The active site involves Glu-116. One can recognise a DRBM domain in the interval 154 to 224 (DPKTRLQEFL…AETALEQLTN (71 aa)). A disordered region spans residues 204 to 225 (GTSRRKAEQAAAETALEQLTNG). Residues 212–225 (QAAAETALEQLTNG) are compositionally biased toward low complexity.

The protein belongs to the ribonuclease III family. Homodimer. Mg(2+) is required as a cofactor.

Its subcellular location is the cytoplasm. The enzyme catalyses Endonucleolytic cleavage to 5'-phosphomonoester.. In terms of biological role, digests double-stranded RNA. Involved in the processing of primary rRNA transcript to yield the immediate precursors to the large and small rRNAs (23S and 16S). Processes some mRNAs, and tRNAs when they are encoded in the rRNA operon. Processes pre-crRNA and tracrRNA of type II CRISPR loci if present in the organism. The protein is Ribonuclease 3 of Vibrio parahaemolyticus serotype O3:K6 (strain RIMD 2210633).